We begin with the raw amino-acid sequence, 364 residues long: Aminomethyltransferase (364 aa).

The protein belongs to the GcvT family. As to quaternary structure, the glycine cleavage system is composed of four proteins: P, T, L and H.

It carries out the reaction N(6)-[(R)-S(8)-aminomethyldihydrolipoyl]-L-lysyl-[protein] + (6S)-5,6,7,8-tetrahydrofolate = N(6)-[(R)-dihydrolipoyl]-L-lysyl-[protein] + (6R)-5,10-methylene-5,6,7,8-tetrahydrofolate + NH4(+). The glycine cleavage system catalyzes the degradation of glycine. This chain is Aminomethyltransferase, found in Shewanella baltica (strain OS155 / ATCC BAA-1091).